The primary structure comprises 200 residues: ATP-dependent Clp protease proteolytic subunit 3 (200 aa).

Residue serine 101 is the Nucleophile of the active site. Histidine 126 is an active-site residue.

This sequence belongs to the peptidase S14 family. Fourteen ClpP subunits assemble into 2 heptameric rings which stack back to back to give a disk-like structure with a central cavity, resembling the structure of eukaryotic proteasomes.

It is found in the cytoplasm. It catalyses the reaction Hydrolysis of proteins to small peptides in the presence of ATP and magnesium. alpha-casein is the usual test substrate. In the absence of ATP, only oligopeptides shorter than five residues are hydrolyzed (such as succinyl-Leu-Tyr-|-NHMec, and Leu-Tyr-Leu-|-Tyr-Trp, in which cleavage of the -Tyr-|-Leu- and -Tyr-|-Trp bonds also occurs).. Functionally, cleaves peptides in various proteins in a process that requires ATP hydrolysis. Has a chymotrypsin-like activity. Plays a major role in the degradation of misfolded proteins. This is ATP-dependent Clp protease proteolytic subunit 3 from Synechococcus sp. (strain CC9605).